The primary structure comprises 899 residues: Origin recognition complex subunit 5 (899 aa).

Disordered regions lie at residues 27–47 (FSSP…NDDT), 100–166 (DRIN…EYKD), and 194–238 (KNLE…DGNL). Acidic residues predominate over residues 105-160 (SEEETNINDDNNDDNNGDYDDDNNSDDDDDNDDNNNNDDNNNDDDEDVDDFEDIKE). Residues 207–218 (SSDNSMTSSSEE) are compositionally biased toward low complexity. Residues 227–237 (ESDKESDKDGN) are compositionally biased toward basic and acidic residues. 303–310 (GLPGMGKT) provides a ligand contact to ATP. A disordered region spans residues 409–469 (KRTTENIRSP…NNNSNNVRFN (61 aa)). A compositionally biased stretch (low complexity) spans 455-469 (KNNFNNNNSNNVRFN).

The protein belongs to the ORC5 family. In terms of assembly, component of the origin recognition complex (ORC). Interacts with PCNA1; the interaction occurs during the trophozoite stage but not at the late schizont stage.

Its subcellular location is the nucleus. It carries out the reaction ATP + H2O = ADP + phosphate + H(+). Component of the origin recognition complex (ORC) that binds origins of replication. The chain is Origin recognition complex subunit 5 from Plasmodium falciparum (isolate 3D7).